Here is an 88-residue protein sequence, read N- to C-terminus: MKVSVLITLAVLGVMFVWASAAELEQSGSDQKDSDSPAWLKSMERIFQSEERDCRKMFGGCSKHEDCCAHLACKRTFNYCAWDGSFSK.

The signal sequence occupies residues 1-21 (MKVSVLITLAVLGVMFVWASA). A propeptide spanning residues 22-52 (AELEQSGSDQKDSDSPAWLKSMERIFQSEER) is cleaved from the precursor. 3 disulfide bridges follow: Cys-54/Cys-68, Cys-61/Cys-73, and Cys-67/Cys-80.

It belongs to the neurotoxin 10 (Hwtx-1) family. 41 (Jztx-36) subfamily. Expressed by the venom gland.

Its subcellular location is the secreted. Probable ion channel inhibitor. This chain is U13-theraphotoxin-Cg1a, found in Chilobrachys guangxiensis (Chinese earth tiger tarantula).